The following is a 429-amino-acid chain: Zinc-regulated GTPase metalloprotein activator 1 (429 aa).

The short motif at 15–22 (GELPCLVT) is the psi-PxLVp motif element. 78 to 85 (GYLGSGKS) contributes to the GTP binding site. Residues cysteine 136, cysteine 138, and cysteine 139 each contribute to the Zn(2+) site. The short motif at 136–139 (CLCC) is the CXCC motif element. GTP-binding positions include 139–143 (CSLKN) and 244–247 (NKYD). The CobW C-terminal domain occupies 362-428 (RDWEVQRTKG…SIEELLRKTL (67 aa)).

It belongs to the SIMIBI class G3E GTPase family. ZNG1 subfamily.

The catalysed reaction is GTP + H2O = GDP + phosphate + H(+). In terms of biological role, zinc chaperone that directly transfers zinc cofactor to target metalloproteins, thereby activating them. Catalyzes zinc insertion into the active site of methionine aminopeptidase MAP1, which function to cleave the initiator methionine from polypeptides during or after protein translation. Mechanistically, the N-terminal psi-PxLVp motif binds to the C6H2-type zinc finger of inactive form of MAP1. After formation of the docked complex, zinc is transferred from the CXCC motif in the GTPase domain of ZNG1 to the zinc binding site in the peptidase domain of MAP1 in a process requiring GTP hydrolysis. GTP/GDP exchange is required for release of active MAP1. The chain is Zinc-regulated GTPase metalloprotein activator 1 from Saccharomyces cerevisiae (strain ATCC 204508 / S288c) (Baker's yeast).